Consider the following 1400-residue polypeptide: Clustered mitochondria protein homolog (1400 aa).

Disordered stretches follow at residues 1–39, 56–78, and 212–243; these read MVSKTDDIPASVPNCSPADFARDGETANSKGTTSKKEAS, GHDQAEEADSKQDGSGDADQAED, and GDTGKRKKKGSELEQIDCTPPEHILPGSKERP. Positions 56–69 are enriched in basic and acidic residues; sequence GHDQAEEADSKQDG. Residues 380 to 622 form the Clu domain; sequence RAEDAYTSRL…RTFPPDLNFL (243 aa). A disordered region spans residues 684–741; sequence AALQDSNAAGAGSENKPLALESCDGTPDSPTSSESTLTPEDSEATTVSENSSAENQEA. Positions 707–722 are enriched in low complexity; it reads DGTPDSPTSSESTLTP. Over residues 727 to 741 the composition is skewed to polar residues; the sequence is ATTVSENSSAENQEA. 4 TPR repeats span residues 1088–1121, 1130–1163, 1172–1205, and 1214–1247; these read AFHFFQSGQAKVQQGFLKEGCELINEALNLFNNV, CACLRLLARLNYIMGDHPEALSNQQKAVLMSERV, IQEYMHLALYCFANGQLSTALKLLYRARYLMLVV, and ALLDSNIGLVLHGVMEYDLSLRFLENALAINTKY. A compositionally biased stretch (polar residues) spans 1377-1388; sequence QDSGKIQEQQGS. The interval 1377-1400 is disordered; it reads QDSGKIQEQQGSHLELDDKLPVDD. Over residues 1390–1400 the composition is skewed to basic and acidic residues; that stretch reads LELDDKLPVDD.

This sequence belongs to the CLU family.

The protein resides in the cytoplasm. Its function is as follows. mRNA-binding protein involved in proper cytoplasmic distribution of mitochondria. This is Clustered mitochondria protein homolog from Danio rerio (Zebrafish).